Consider the following 275-residue polypeptide: Mitochondrial outer membrane porin (275 aa).

This sequence belongs to the eukaryotic mitochondrial porin (TC 1.B.8.1) family.

It localises to the mitochondrion outer membrane. Its function is as follows. Forms a channel through the cell membrane that allows diffusion of small hydrophilic molecules. The channel adopts an open conformation at low or zero membrane potential and a closed conformation at potentials above 30-40 mV. The open state has a weak anion selectivity whereas the closed state is cation-selective. The polypeptide is Mitochondrial outer membrane porin (VDAC1) (Triticum aestivum (Wheat)).